The following is a 284-amino-acid chain: Shikimate kinase (284 aa).

Residue 85–95 (PLAAGLKSSSA) coordinates ATP.

The protein belongs to the GHMP kinase family. Archaeal shikimate kinase subfamily.

The protein localises to the cytoplasm. It catalyses the reaction shikimate + ATP = 3-phosphoshikimate + ADP + H(+). It functions in the pathway metabolic intermediate biosynthesis; chorismate biosynthesis; chorismate from D-erythrose 4-phosphate and phosphoenolpyruvate: step 5/7. The polypeptide is Shikimate kinase (Halobacterium salinarum (strain ATCC 29341 / DSM 671 / R1)).